A 45-amino-acid polypeptide reads, in one-letter code: Myotoxin-2 (45 aa).

3 disulfides stabilise this stretch: Cys4–Cys36, Cys11–Cys30, and Cys18–Cys37.

It belongs to the crotamine-myotoxin family. Monomer. Expressed by the venom gland.

The protein localises to the secreted. Its function is as follows. Cationic peptide that possesses multiple functions. It acts as a cell-penetrating peptide (CPP), and as a potent voltage-gated potassium channel (Kv) inhibitor. It exhibits antimicrobial activities, hind limb paralysis, and severe muscle necrosis by a non-enzymatic mechanism. This Crotalus viridis viridis (Prairie rattlesnake) protein is Myotoxin-2.